Here is a 252-residue protein sequence, read N- to C-terminus: Probable oligoribonuclease (252 aa).

The Exonuclease domain maps to 81–241 (VWIDCEMTGL…ALSDILESIG (161 aa)). Tyr202 is an active-site residue.

Belongs to the oligoribonuclease family.

The protein resides in the cytoplasm. The protein localises to the nucleus. Its function is as follows. 3'-to-5' exoribonuclease specific for small oligoribonucleotides. This is Probable oligoribonuclease (rex2) from Schizosaccharomyces pombe (strain 972 / ATCC 24843) (Fission yeast).